A 358-amino-acid polypeptide reads, in one-letter code: 2-oxoisovalerate dehydrogenase subunit beta 2, mitochondrial (358 aa).

The transit peptide at 1–16 (MAAALVRRFCRGSSFP) directs the protein to the mitochondrion. Tyr-119 serves as a coordination point for thiamine diphosphate. The K(+) site is built by Gly-145, Leu-147, Thr-148, Asp-198, and Asn-200.

Heterotetramer of alpha and beta chains. It depends on thiamine diphosphate as a cofactor. As to expression, expressed in the non-photosynthetic organs such as siliques, flowers and roots.

It is found in the mitochondrion matrix. The catalysed reaction is N(6)-[(R)-lipoyl]-L-lysyl-[protein] + 3-methyl-2-oxobutanoate + H(+) = N(6)-[(R)-S(8)-2-methylpropanoyldihydrolipoyl]-L-lysyl-[protein] + CO2. In terms of biological role, the branched-chain alpha-keto dehydrogenase complex catalyzes the overall conversion of alpha-keto acids to acyl-CoA and CO(2). It contains multiple copies of three enzymatic components: branched-chain alpha-keto acid decarboxylase (E1), lipoamide acyltransferase (E2) and lipoamide dehydrogenase (E3). Required during sugar starvation and acts under the control of a sugar-sensing mechanism involving Ser/Thr kinases and phosphatases. This Arabidopsis thaliana (Mouse-ear cress) protein is 2-oxoisovalerate dehydrogenase subunit beta 2, mitochondrial (DIN4).